Reading from the N-terminus, the 142-residue chain is Ribosomal RNA large subunit methyltransferase H (142 aa).

Glycine 89 provides a ligand contact to S-adenosyl-L-methionine.

It belongs to the RNA methyltransferase RlmH family. In terms of assembly, homodimer.

The protein localises to the cytoplasm. The catalysed reaction is pseudouridine(1915) in 23S rRNA + S-adenosyl-L-methionine = N(3)-methylpseudouridine(1915) in 23S rRNA + S-adenosyl-L-homocysteine + H(+). Specifically methylates the pseudouridine at position 1915 (m3Psi1915) in 23S rRNA. The chain is Ribosomal RNA large subunit methyltransferase H from Zymomonas mobilis subsp. mobilis (strain ATCC 31821 / ZM4 / CP4).